Reading from the N-terminus, the 698-residue chain is Glycine--tRNA ligase beta subunit (698 aa).

It belongs to the class-II aminoacyl-tRNA synthetase family. Tetramer of two alpha and two beta subunits.

It is found in the cytoplasm. It carries out the reaction tRNA(Gly) + glycine + ATP = glycyl-tRNA(Gly) + AMP + diphosphate. The sequence is that of Glycine--tRNA ligase beta subunit from Xanthomonas campestris pv. campestris (strain B100).